The sequence spans 516 residues: Bifunctional purine biosynthesis protein PurH (516 aa).

The MGS-like domain occupies 1-146; that stretch reads MAPFALLSVS…KNHADVAVLT (146 aa).

This sequence belongs to the PurH family.

It carries out the reaction (6R)-10-formyltetrahydrofolate + 5-amino-1-(5-phospho-beta-D-ribosyl)imidazole-4-carboxamide = 5-formamido-1-(5-phospho-D-ribosyl)imidazole-4-carboxamide + (6S)-5,6,7,8-tetrahydrofolate. The catalysed reaction is IMP + H2O = 5-formamido-1-(5-phospho-D-ribosyl)imidazole-4-carboxamide. Its pathway is purine metabolism; IMP biosynthesis via de novo pathway; 5-formamido-1-(5-phospho-D-ribosyl)imidazole-4-carboxamide from 5-amino-1-(5-phospho-D-ribosyl)imidazole-4-carboxamide (10-formyl THF route): step 1/1. It participates in purine metabolism; IMP biosynthesis via de novo pathway; IMP from 5-formamido-1-(5-phospho-D-ribosyl)imidazole-4-carboxamide: step 1/1. This is Bifunctional purine biosynthesis protein PurH from Parasynechococcus marenigrum (strain WH8102).